The chain runs to 77 residues: Acyl carrier protein (77 aa).

Residues 1–76 enclose the Carrier domain; sequence MAVFDDVRDV…DVVNYIEKLG (76 aa). Ser36 is subject to O-(pantetheine 4'-phosphoryl)serine.

The protein belongs to the acyl carrier protein (ACP) family. In terms of processing, 4'-phosphopantetheine is transferred from CoA to a specific serine of apo-ACP by AcpS. This modification is essential for activity because fatty acids are bound in thioester linkage to the sulfhydryl of the prosthetic group.

Its subcellular location is the cytoplasm. It functions in the pathway lipid metabolism; fatty acid biosynthesis. Its function is as follows. Carrier of the growing fatty acid chain in fatty acid biosynthesis. The sequence is that of Acyl carrier protein from Campylobacter curvus (strain 525.92).